The sequence spans 244 residues: 5-oxoprolinase subunit A (244 aa).

Belongs to the LamB/PxpA family. Forms a complex composed of PxpA, PxpB and PxpC.

The enzyme catalyses 5-oxo-L-proline + ATP + 2 H2O = L-glutamate + ADP + phosphate + H(+). In terms of biological role, catalyzes the cleavage of 5-oxoproline to form L-glutamate coupled to the hydrolysis of ATP to ADP and inorganic phosphate. This chain is 5-oxoprolinase subunit A, found in Escherichia coli O7:K1 (strain IAI39 / ExPEC).